The sequence spans 138 residues: Histone H3 (138 aa).

Residues 1 to 49 are disordered; the sequence is MARTKQTARKSTGGKAPRKQLATKAARKQAPSQVSGGVKKPHRYRPGTV. Lys-5 is modified (N6,N6,N6-trimethyllysine; alternate). The residue at position 5 (Lys-5) is an N6,N6-dimethyllysine; alternate. 2 positions are modified to N6-methyllysine; alternate: Lys-5 and Lys-10. At Lys-10 the chain carries N6-acetyllysine; alternate. Ser-11 is modified (phosphoserine). The residue at position 15 (Lys-15) is an N6,N6-dimethyllysine; alternate. 5 positions are modified to N6-methyllysine; alternate: Lys-15, Lys-19, Lys-24, Lys-28, and Lys-39. Residues Lys-15, Lys-19, Lys-24, Lys-28, and Lys-39 each carry the N6-acetyllysine; alternate modification. 2 positions are modified to N6,N6,N6-trimethyllysine; alternate: Lys-28 and Lys-39. N6,N6-dimethyllysine; alternate is present on residues Lys-28 and Lys-39. N6-acetyllysine occurs at positions 59 and 67. Lys-82 carries the N6,N6,N6-trimethyllysine; alternate modification. Lys-82 carries the post-translational modification N6,N6-dimethyllysine; alternate. Residue Lys-82 is modified to N6-methyllysine; alternate.

This sequence belongs to the histone H3 family. In terms of assembly, the nucleosome is a histone octamer containing two molecules each of H2A, H2B, H3 and H4 assembled in one H3-H4 heterotetramer and two H2A-H2B heterodimers. The octamer wraps approximately 147 bp of DNA. Phosphorylated to form H3S10ph. H3S10ph promotes subsequent H3K14ac formation and is required for transcriptional activation through TBP recruitment to the promoters. Post-translationally, mono-, di- and trimethylated by the COMPASS complex to form H3K4me1/2/3. H3K4me activates gene expression by regulating transcription elongation and plays a role in telomere length maintenance. H3K4me enrichment correlates with transcription levels, and occurs in a 5' to 3' gradient with H3K4me3 enrichment at the 5'-end of genes, shifting to H3K4me2 and then H3K4me1. Methylated by SET2 to form H3K36me. H3K36me represses gene expression. Methylated by DOT1 to form H3K79me. H3K79me is required for association of SIR proteins with telomeric regions and for telomeric silencing. The COMPASS-mediated formation of H3K4me2/3 and the DOT1-mediated formation of H3K79me require H2BK123ub1. In terms of processing, acetylation of histone H3 leads to transcriptional activation. H3K14ac formation by GCN5 is promoted by H3S10ph. H3K14ac can also be formed by ESA1. H3K56ac formation occurs predominantly in newly synthesized H3 molecules during G1, S and G2/M of the cell cycle and may be involved in DNA repair.

The protein resides in the nucleus. Its subcellular location is the chromosome. Core component of nucleosome. Nucleosomes wrap and compact DNA into chromatin, limiting DNA accessibility to the cellular machineries which require DNA as a template. Histones thereby play a central role in transcription regulation, DNA repair, DNA replication and chromosomal stability. DNA accessibility is regulated via a complex set of post-translational modifications of histones, also called histone code, and nucleosome remodeling. The polypeptide is Histone H3 (HHT1) (Cryptococcus neoformans var. neoformans serotype D (strain B-3501A) (Filobasidiella neoformans)).